We begin with the raw amino-acid sequence, 526 residues long: Nucleolar complex protein 4 homolog A (526 aa).

Transmembrane regions (helical) follow at residues 307 to 327 (AAYDVGGAISLLALNGLFILI), 358 to 378 (FFHLANMFLSSTHLPVYLVAA), and 386 to 406 (LALTAPPQVLLMIIPFICNLI).

This sequence belongs to the CBF/MAK21 family.

It localises to the nucleus membrane. It is found in the nucleus. Its subcellular location is the nucleolus. This is Nucleolar complex protein 4 homolog A (noc4l-a) from Xenopus laevis (African clawed frog).